A 476-amino-acid polypeptide reads, in one-letter code: UDP-N-acetylmuramoylalanine--D-glutamate ligase (476 aa).

Residue 122 to 128 (GSNAKST) coordinates ATP.

It belongs to the MurCDEF family.

It is found in the cytoplasm. The enzyme catalyses UDP-N-acetyl-alpha-D-muramoyl-L-alanine + D-glutamate + ATP = UDP-N-acetyl-alpha-D-muramoyl-L-alanyl-D-glutamate + ADP + phosphate + H(+). The protein operates within cell wall biogenesis; peptidoglycan biosynthesis. Cell wall formation. Catalyzes the addition of glutamate to the nucleotide precursor UDP-N-acetylmuramoyl-L-alanine (UMA). This is UDP-N-acetylmuramoylalanine--D-glutamate ligase from Psychrobacter arcticus (strain DSM 17307 / VKM B-2377 / 273-4).